Reading from the N-terminus, the 132-residue chain is Agouti-signaling protein (132 aa).

The N-terminal stretch at 1-22 (MDVTRLLLATLLVFLCFFTAYS) is a signal peptide. Asn39 is a glycosylation site (N-linked (GlcNAc...) asparagine). The interval 61-87 (QISRKEAEKKRSSKKEASMKKVARPRT) is disordered. Residues 63-79 (SRKEAEKKRSSKKEASM) show a composition bias toward basic and acidic residues. 5 disulfides stabilise this stretch: Cys93–Cys108, Cys100–Cys114, Cys107–Cys125, Cys111–Cys132, and Cys116–Cys123. The Agouti domain occupies 93–132 (CVATRDSCKPPAPACCDPCAFCQCRFFRSACSCRVLSLNC).

It localises to the secreted. Its function is as follows. Involved in the regulation of melanogenesis. The binding of ASP to MC1R precludes alpha-MSH initiated signaling and thus blocks production of cAMP, leading to a down-regulation of eumelanogenesis (brown/black pigment) and thus increasing synthesis of pheomelanin (yellow/red pigment). The chain is Agouti-signaling protein (ASIP) from Macaca hecki (Heck's macaque).